The primary structure comprises 293 residues: Nucleotide-binding protein OB2468 (293 aa).

14–21 serves as a coordination point for ATP; the sequence is GMSGAGKT. Residue 65 to 68 coordinates GTP; it reads DLRG.

It belongs to the RapZ-like family.

Functionally, displays ATPase and GTPase activities. The sequence is that of Nucleotide-binding protein OB2468 from Oceanobacillus iheyensis (strain DSM 14371 / CIP 107618 / JCM 11309 / KCTC 3954 / HTE831).